The following is a 288-amino-acid chain: Proteasome assembly chaperone 1 (288 aa).

Ala2 is subject to N-acetylalanine. The tract at residues 12-38 (TPCRAGTEEEEEEEDGNRETPEDREVR) is disordered. At Thr18 the chain carries Phosphothreonine. Basic and acidic residues predominate over residues 28–38 (NRETPEDREVR). Thr54 is modified (phosphothreonine). Position 180 is a phosphoserine (Ser180). Lys264 bears the N6-acetyllysine mark.

It belongs to the PSMG1 family. In terms of assembly, forms a heterodimer with PSMG2. The PSMG1-PSMG2 heterodimer interacts directly with the PSMA5 and PSMA7 proteasome alpha subunits. In terms of processing, degraded by the proteasome upon completion of 20S proteasome maturation.

The protein resides in the cytoplasm. It localises to the endoplasmic reticulum. Chaperone protein which promotes assembly of the 20S proteasome as part of a heterodimer with PSMG2. The PSMG1-PSMG2 heterodimer binds to the PSMA5 and PSMA7 proteasome subunits, promotes assembly of the proteasome alpha subunits into the heteroheptameric alpha ring and prevents alpha ring dimerization. This is Proteasome assembly chaperone 1 from Bos taurus (Bovine).